Consider the following 562-residue polypeptide: NAD-dependent malic enzyme (562 aa).

Y101 acts as the Proton donor in catalysis. Residue R154 participates in NAD(+) binding. The active-site Proton acceptor is the K172. A divalent metal cation is bound by residues E243, D244, and D267. Residues D267 and N415 each contribute to the NAD(+) site.

Belongs to the malic enzymes family. In terms of assembly, homotetramer. Requires Mg(2+) as cofactor. Mn(2+) serves as cofactor.

It carries out the reaction (S)-malate + NAD(+) = pyruvate + CO2 + NADH. It catalyses the reaction oxaloacetate + H(+) = pyruvate + CO2. The sequence is that of NAD-dependent malic enzyme from Colwellia psychrerythraea (strain 34H / ATCC BAA-681) (Vibrio psychroerythus).